Here is a 732-residue protein sequence, read N- to C-terminus: Small conductance calcium-activated potassium channel protein 3 (732 aa).

Positions 1–11 (MDTSGHFHDSG) are enriched in basic and acidic residues. Disordered stretches follow at residues 1–82 (MDTS…QQAP) and 119–161 (AILH…QASP). The segment covering 35–61 (QPPPPPAPPAVPQQPPGPLLQPQPPQP) has biased composition (pro residues). The span at 62–82 (QQQQSQQQQQQQSQQQQQQAP) shows a compositional bias: low complexity. Positions 119–133 (AILHPSSRQGSQLNL) are enriched in polar residues. Over residues 139 to 148 (GHSPSSTATS) the composition is skewed to low complexity. Position 168 is a phosphoserine (Ser-168). A compositionally biased stretch (polar residues) spans 241–257 (THNHQHAGTTAGSTTFP). Residues 241-260 (THNHQHAGTTAGSTTFPKAN) form a disordered region. A helical transmembrane segment spans residues 289–309 (LIFGMFGIVVMVIETELSWGL). Residues 316-336 (FSLALKCLISLSTVILLGLII) traverse the membrane as a helical segment. The helical transmembrane segment at 367 to 387 (ISLEMLVCAIHPIPGEYKFFW) threads the bilayer. The helical transmembrane segment at 406–426 (IILSIPMFLRLYLIARVMLLH) threads the bilayer. The helical transmembrane segment at 455-475 (LMTICPGTVLLVFSISLWIIA) threads the bilayer. An intramembrane region (pore-forming) is located at residues 495–515 (FLGAMWLISITFLSIGYGDMV). A helical transmembrane segment spans residues 524–544 (VCLLTGIMGAGCTALVVAVVA). The tract at residues 562-638 (DTQLTKRIKN…LVDLSKMQNV (77 aa)) is calmodulin-binding. A coiled-coil region spans residues 643–670 (ITELNDRSEDLEKQIGSLESKLEHLTAS). Positions 704-732 (GTSHAPPSDSPIGISSTSFPTPYTSSSSC) are disordered. Low complexity predominate over residues 718-732 (SSTSFPTPYTSSSSC).

Belongs to the potassium channel KCNN family. KCa2.3/KCNN3 subfamily. Homodimer. Heteromultimer with KCNN2 or KCNN1; this modulates plasma membrane expression and consequently the small conductance calcium-activated potassium channel activity. The complex is composed of 4 channel subunits each of which binds to a calmodulin subunit which regulates the channel activity through calcium-binding. Interacts with CALM1. In terms of tissue distribution, expressed at low levels in atrial and ventricular myocytes (at protein level).

It is found in the cell membrane. The protein localises to the cytoplasm. Its subcellular location is the myofibril. The protein resides in the sarcomere. It localises to the z line. The enzyme catalyses K(+)(in) = K(+)(out). Its activity is regulated as follows. Inhibited by bee venom neurotoxin apamin. Small conductance calcium-activated potassium channel that mediates the voltage-independent transmembrane transfer of potassium across the cell membrane through a constitutive interaction with calmodulin which binds the intracellular calcium allowing its opening. The current is characterized by a voltage-independent activation, an intracellular calcium concentration increase-dependent activation and a single-channel conductance of 10 picosiemens. Also presents an inwardly rectifying current, thus reducing its already small outward conductance of potassium ions, which is particularly the case when the membrane potential displays positive values, above + 20 mV. Activation is followed by membrane hyperpolarization. Thought to regulate neuronal excitability by contributing to the slow component of synaptic afterhyperpolarization. The chain is Small conductance calcium-activated potassium channel protein 3 from Mus musculus (Mouse).